The primary structure comprises 212 residues: Thymidylate kinase (212 aa).

Residue 10 to 17 coordinates ATP; that stretch reads GLEGAGKT.

It belongs to the thymidylate kinase family.

It catalyses the reaction dTMP + ATP = dTDP + ADP. Its function is as follows. Phosphorylation of dTMP to form dTDP in both de novo and salvage pathways of dTTP synthesis. This Yersinia enterocolitica serotype O:8 / biotype 1B (strain NCTC 13174 / 8081) protein is Thymidylate kinase.